Here is a 485-residue protein sequence, read N- to C-terminus: Forkhead box protein N3 (485 aa).

The tract at residues Met-1 to Gly-21 is disordered. Ser-83, Ser-85, and Ser-97 each carry phosphoserine. The tract at residues Pro-86 to Arg-108 is disordered. The segment at residues Lys-114–Ser-210 is a DNA-binding region (fork-head). The segment at Arg-315–Ser-454 is disordered. Residues Ser-338 to Ser-359 show a composition bias toward low complexity. Positions His-382–Leu-404 are enriched in basic and acidic residues. Residues Gln-412 to Lys-424 are compositionally biased toward basic residues. Residue Ser-443 is modified to Phosphoserine.

As to quaternary structure, interacts through its C-terminus with the C-terminus of SNW1/SKIP.

It localises to the nucleus. In terms of biological role, acts as a transcriptional repressor. May be involved in DNA damage-inducible cell cycle arrests (checkpoints). This chain is Forkhead box protein N3 (FOXN3), found in Sus scrofa (Pig).